We begin with the raw amino-acid sequence, 342 residues long: UDP-N-acetylglucosamine transporter YEA4 (342 aa).

Topologically, residues Met-1–Lys-6 are cytoplasmic. Residues Ala-7 to Ser-27 form a helical membrane-spanning segment. The Lumenal portion of the chain corresponds to Asn-28–Asn-35. Residues Leu-36–Val-56 traverse the membrane as a helical segment. The Cytoplasmic portion of the chain corresponds to His-57–Pro-61. The helical transmembrane segment at Tyr-62–Ile-82 threads the bilayer. Residues Ser-83–Ser-96 are Lumenal-facing. The chain crosses the membrane as a helical span at residues Ile-97–Leu-117. The Cytoplasmic segment spans residues Leu-118–Tyr-123. A helical membrane pass occupies residues Thr-124–Phe-144. The Lumenal portion of the chain corresponds to Lys-145–Asp-168. The chain crosses the membrane as a helical span at residues Leu-169–Ser-189. Over Ala-190–Glu-253 the chain is Cytoplasmic. The chain crosses the membrane as a helical span at residues Thr-254 to Ala-274. Residues Ser-275–Tyr-307 are Lumenal-facing. Residues Thr-308–Ile-328 traverse the membrane as a helical segment. At His-329–Lys-342 the chain is on the cytoplasmic side.

This sequence belongs to the nucleotide-sugar transporter family. SLC35B subfamily.

It localises to the endoplasmic reticulum. The protein resides in the endoplasmic reticulum membrane. In terms of biological role, sugar transporter that specifically mediates the transport of UDP-N-acetylglucosamine (UDP-GlcNAc) and is required for cell wall chitin synthesis. The chain is UDP-N-acetylglucosamine transporter YEA4 (YEA4) from Saccharomyces cerevisiae (strain ATCC 204508 / S288c) (Baker's yeast).